The primary structure comprises 293 residues: Germ cell-specific gene 1-like protein 2 (293 aa).

At 1-8 the chain is on the cytoplasmic side; it reads MDRAKQQQ. Residues 9–29 traverse the membrane as a helical segment; sequence ALLLLPVCLALTFSLTAVVSS. Residues 30–120 are Extracellular-facing; that stretch reads HWCEGTRRVV…RSVVPAEEQG (91 aa). N-linked (GlcNAc...) asparagine glycosylation is found at N59 and N67. Residues 121–141 form a helical membrane-spanning segment; the sequence is VLWLSIGGEVLDIVLILTSAI. Residues 142–160 lie on the Cytoplasmic side of the membrane; sequence LLGSRVSCRSPGFHWLRVD. The helical transmembrane segment at 161–181 threads the bilayer; sequence ALVAIFMVLAGLLGMVAHMMY. Topologically, residues 182 to 204 are extracellular; that stretch reads TTIFQITVNLGPEDWKPQTWDYG. A helical transmembrane segment spans residues 205–225; it reads WSYCLAWGSFALCLAVSVSAM. The Cytoplasmic segment spans residues 226–293; that stretch reads SRFTAARLEF…PGAPGKVSIC (68 aa).

It belongs to the GSG1 family.

The protein localises to the membrane. The polypeptide is Germ cell-specific gene 1-like protein 2 (Homo sapiens (Human)).